Reading from the N-terminus, the 1021-residue chain is Ribosome quality control complex subunit 2 (1021 aa).

The stretch at 348–388 (IEAQKLKKRAHDRLATAERRLESAKEDQARKLQSLQDAQAT) forms a coiled coil. Positions 457 to 484 (NPESVDNSDESSETSDDDLDDSDDDNKV) are disordered. Residues 462 to 480 (DNSDESSETSDDDLDDSDD) are compositionally biased toward acidic residues. A Phosphoserine modification is found at serine 478. 2 coiled-coil regions span residues 507 to 546 (NARK…DLKR) and 698 to 727 (DEKS…LKME). Composition is skewed to polar residues over residues 746–761 (YNED…TTGS) and 839–856 (ISSQ…TPTA). 2 disordered regions span residues 746–801 (YNED…TALE) and 832–905 (HAAR…VESF). The span at 876 to 905 (DQSRNSEAENEKGLSTEQRDEKKHAKVESF) shows a compositional bias: basic and acidic residues.

It belongs to the NEMF family. Component of the ribosome quality control complex (RQC), composed of the E3 ubiquitin ligase rkr1/ltn1, rqc1 and mtr1/rqc2, as well as cdc48 and its ubiquitin-binding cofactors associated with the 60S ribosomal subunit. RQC2 binds to the 40S-binding surface of tRNAs.

It is found in the cytoplasm. Its function is as follows. Key component of the ribosome quality control complex (RQC), a ribosome-associated complex that mediates the extraction of incompletely synthesized nascent chains from stalled ribosomes as well as their ubiquitin-mediated proteasomal degradation. Thereby, frees 60S subunit ribosomes from the stalled translation complex and prevents the accumulation of nascent polypeptide chains that are potentially toxic for the cell. Within the RQC complex, mtr1/rqc2 specifically binds stalled 60S ribosomal subunits by recognizing an exposed, nascent chain-conjugated tRNA moiety and promotes the recruitment of rkr1/ltn1 to stalled 60S subunits. Following binding to stalled 60S ribosomal subunits, mtr1/rqc2 mediates CAT tailing by recruiting alanine- and threonine-charged tRNA to the A-site and directing the elongation of stalled nascent chains independently of mRNA or 40S subunits, leading to non-templated C-terminal Ala and Thr extensions (CAT tails). CAT tails promote the rkr1/ltn1-mediated ubiquitination of incompletely synthesized nascent polypeptides: CAT tailing facilitates rkr1/ltn1-dependent ubiquitination by exposing lysine residues that would otherwise remain buried in the ribosomal exit tunnel. Following ubiquitination, incompletely synthesized nascent polypeptides are recognized by CDC48 and degraded by the proteasome. CAT-tailed proteins tend to aggregate and sequester chaperones and can induce proteotoxic stress; their rkr1/ltn1-dependent ubiquitination and degradation is required to prevent proteotoxic stress. The chain is Ribosome quality control complex subunit 2 from Schizosaccharomyces pombe (strain 972 / ATCC 24843) (Fission yeast).